The primary structure comprises 189 residues: GTPase NRas (189 aa).

GTP-binding positions include 10–18 and 29–30; these read GAGGVGKSA and VD. The short motif at 32 to 40 is the Effector region element; it reads YDPTIEDSY. 57-61 is a binding site for GTP; sequence DTAGQ. Serine 89 bears the Phosphoserine mark. Residue 116–119 coordinates GTP; sequence NKCD. A hypervariable region region spans residues 166 to 185; it reads YRMKKLNSSDDGTQGCLGLS. Lysine 170 participates in a covalent cross-link: Glycyl lysine isopeptide (Lys-Gly) (interchain with G-Cter in ubiquitin). Cysteine 181 is lipidated: S-palmitoyl cysteine. Cysteine 186 is lipidated: S-farnesyl cysteine. A propeptide spans 187–189 (removed in mature form); it reads AVM.

This sequence belongs to the small GTPase superfamily. Ras family. As to quaternary structure, interacts (active GTP-bound form preferentially) with RGS14. Interacts (active GTP-bound form) with RASSF7. Interacts (active GTP-bound form) with both SHOC2 and PP1c (all isoforms) to form a tertiary complex; SHOC2 and PP1c preferably bind M-Ras/MRAS, but they also bind K-Ras/KRAS, N-Ras/NRAS and H-Ras/HRAS. In terms of processing, palmitoylated by the ZDHHC9-GOLGA7 complex. Depalmitoylated by ABHD17A, ABHD17B and ABHD17C. A continuous cycle of de- and re-palmitoylation regulates rapid exchange between plasma membrane and Golgi. Acetylation at Lys-104 prevents interaction with guanine nucleotide exchange factors (GEFs). Post-translationally, ubiquitinated by the BCR(LZTR1) E3 ubiquitin ligase complex at Lys-170 in a non-degradative manner, leading to inhibit Ras signaling by decreasing Ras association with membranes. In terms of processing, phosphorylation at Ser-89 enhances NRAS association with its downstream effectors.

It localises to the cell membrane. The protein localises to the golgi apparatus membrane. The enzyme catalyses GTP + H2O = GDP + phosphate + H(+). Its activity is regulated as follows. Alternates between an inactive form bound to GDP and an active form bound to GTP. Activated by a guanine nucleotide-exchange factor (GEF) and inactivated by a GTPase-activating protein (GAP). Its function is as follows. Ras proteins bind GDP/GTP and possess intrinsic GTPase activity. This chain is GTPase NRas (NRAS), found in Monodelphis domestica (Gray short-tailed opossum).